A 172-amino-acid chain; its full sequence is Shikimate kinase (172 aa).

Residue 12–17 participates in ATP binding; it reads GSGKTS. T16 contacts Mg(2+). D34, R58, and G81 together coordinate substrate. R122 serves as a coordination point for ATP. A substrate-binding site is contributed by R139.

Belongs to the shikimate kinase family. As to quaternary structure, monomer. It depends on Mg(2+) as a cofactor.

Its subcellular location is the cytoplasm. It carries out the reaction shikimate + ATP = 3-phosphoshikimate + ADP + H(+). It participates in metabolic intermediate biosynthesis; chorismate biosynthesis; chorismate from D-erythrose 4-phosphate and phosphoenolpyruvate: step 5/7. Its function is as follows. Catalyzes the specific phosphorylation of the 3-hydroxyl group of shikimic acid using ATP as a cosubstrate. This is Shikimate kinase from Dictyoglomus turgidum (strain DSM 6724 / Z-1310).